We begin with the raw amino-acid sequence, 136 residues long: Diuretic hormone 41 (136 aa).

The signal sequence occupies residues 1–26 (MMWWAVWCAAMVAGSVFTAAAPPTDS). The propeptide occupies 27–76 (IDLMQMDPSLADDESLGFAMQSLSGRYAAAPWLYLLADVSHDPQNGSDRV). Isoleucine amide is present on I119. Residues 123 to 136 (GFHWAPSAKAAKFY) constitute a propeptide that is removed on maturation.

This sequence belongs to the sauvagine/corticotropin-releasing factor/urotensin I family.

Its subcellular location is the secreted. In terms of biological role, regulation of fluid secretion. The polypeptide is Diuretic hormone 41 (dh41) (Bombyx mori (Silk moth)).